Here is a 36-residue protein sequence, read N- to C-terminus: U-metritoxin-Msn1a (36 aa).

The ShKT domain occupies cysteine 4–cysteine 36. 3 cysteine pairs are disulfide-bonded: cysteine 4–cysteine 36, cysteine 11–cysteine 28, and cysteine 19–cysteine 32.

Belongs to the sea anemone type 1 potassium channel toxin family. Type 1b subfamily.

It is found in the secreted. It localises to the nematocyst. Has hemolytic activity. Inhibits voltage-gated potassium channels (Kv1/KCNA). In Metridium senile (Brown sea anemone), this protein is U-metritoxin-Msn1a.